The chain runs to 492 residues: Ketol-acid reductoisomerase (NADP(+)) (492 aa).

In terms of domain architecture, KARI N-terminal Rossmann spans 15-208; sequence AQLGKCRFMA…GGHRAGVLES (194 aa). NADP(+)-binding positions include 45–48, R68, R76, S78, and 108–110; these read CGAQ and DKQ. The active site involves H132. Residue G158 participates in NADP(+) binding. 2 consecutive KARI C-terminal knotted domains span residues 209 to 344 and 345 to 485; these read SFVA…NAPQ and FEGK…MTDM. Mg(2+) is bound by residues D217, E221, E389, and E393. S414 provides a ligand contact to substrate.

This sequence belongs to the ketol-acid reductoisomerase family. The cofactor is Mg(2+).

The enzyme catalyses (2R)-2,3-dihydroxy-3-methylbutanoate + NADP(+) = (2S)-2-acetolactate + NADPH + H(+). The catalysed reaction is (2R,3R)-2,3-dihydroxy-3-methylpentanoate + NADP(+) = (S)-2-ethyl-2-hydroxy-3-oxobutanoate + NADPH + H(+). It participates in amino-acid biosynthesis; L-isoleucine biosynthesis; L-isoleucine from 2-oxobutanoate: step 2/4. The protein operates within amino-acid biosynthesis; L-valine biosynthesis; L-valine from pyruvate: step 2/4. Involved in the biosynthesis of branched-chain amino acids (BCAA). Catalyzes an alkyl-migration followed by a ketol-acid reduction of (S)-2-acetolactate (S2AL) to yield (R)-2,3-dihydroxy-isovalerate. In the isomerase reaction, S2AL is rearranged via a Mg-dependent methyl migration to produce 3-hydroxy-3-methyl-2-ketobutyrate (HMKB). In the reductase reaction, this 2-ketoacid undergoes a metal-dependent reduction by NADPH to yield (R)-2,3-dihydroxy-isovalerate. This is Ketol-acid reductoisomerase (NADP(+)) from Yersinia pseudotuberculosis serotype O:3 (strain YPIII).